The sequence spans 162 residues: Precursor protein UG (162 aa).

An N-terminal signal peptide occupies residues 1–19; it reads MERILLCFIVATLVAISMA. The propeptide occupies 20–23; that stretch reads NPRP. 2 cysteine pairs are disulfide-bonded: C30–C42 and C33–C49. The propeptide occupies 56-59; sequence VPKP. Intrachain disulfides connect C66–C78 and C69–C85. Positions 92-95 are excised as a propeptide; sequence VPKP. Cystine bridges form between C102–C114 and C105–C121. Positions 128–131 are excised as a propeptide; the sequence is VPKP. Intrachain disulfides connect C138/C150 and C141/C157.

The protein belongs to the sea anemone BBH family.

The protein resides in the secreted. Its subcellular location is the nematocyst. Functionally, affects the ASIC3 channel (ACCN3) and produces analgesic effects. It produces a reversible inhibition effect on both the transient and the sustained current of human ASIC3 channels expressed in X.laevis oocytes. It completely blocks the transient component (IC(50)=10 uM) and partially (48%) inhibits the amplitude of the sustained component (IC(50)=1.44 uM). Using in vivo tests in mice, it reverses inflammatory and acid-induced pain. Its function is as follows. Does not affect the ASIC3 channel. Does not cause lethality or paralysis of noble crayfish (A.astacus) at a dose of 1 mg/kg. The protein is Precursor protein UG of Urticina grebelnyi (Painted anemone).